We begin with the raw amino-acid sequence, 703 residues long: Elongation factor G (703 aa).

Positions 9–292 constitute a tr-type G domain; the sequence is ERTRNIGIMA…AVVDYLPGPL (284 aa). Residues 18–25, 91–95, and 145–148 each bind GTP; these read AHIDAGKT, DTPGH, and NKMD.

It belongs to the TRAFAC class translation factor GTPase superfamily. Classic translation factor GTPase family. EF-G/EF-2 subfamily.

It is found in the cytoplasm. In terms of biological role, catalyzes the GTP-dependent ribosomal translocation step during translation elongation. During this step, the ribosome changes from the pre-translocational (PRE) to the post-translocational (POST) state as the newly formed A-site-bound peptidyl-tRNA and P-site-bound deacylated tRNA move to the P and E sites, respectively. Catalyzes the coordinated movement of the two tRNA molecules, the mRNA and conformational changes in the ribosome. This Leuconostoc citreum (strain KM20) protein is Elongation factor G.